Here is a 424-residue protein sequence, read N- to C-terminus: Putative histone deacetylase complex subunit cti6 (424 aa).

4 disordered regions span residues Met1–Thr49, Ser117–Ser155, Lys170–Thr341, and Ala381–Arg405. The PHD-type zinc finger occupies Val48–Glu103. Positions Glu127 to Thr137 are enriched in low complexity. Ser187 is subject to Phosphoserine. Positions Asp241–Asp256 are enriched in acidic residues. Over residues Glu257 to Ser266 the composition is skewed to basic and acidic residues. The span at Gln272 to Arg287 shows a compositional bias: low complexity. Over residues Arg294–Asp303 the composition is skewed to basic and acidic residues. Residues Ser313–Lys324 are compositionally biased toward basic residues. Over residues Ser392–Arg405 the composition is skewed to basic and acidic residues.

It localises to the cytoplasm. The protein localises to the nucleus. Could be a component of the RPD3C(L) histone deacetylase complex (HDAC). This is Putative histone deacetylase complex subunit cti6 (cti6) from Schizosaccharomyces pombe (strain 972 / ATCC 24843) (Fission yeast).